A 294-amino-acid chain; its full sequence is Protein C3orf33 (294 aa).

Ala2 is subject to N-acetylalanine. A helical membrane pass occupies residues 40-56 (ISTGMAIAGIMLLLRSI).

As to expression, highly expressed in ileocecal tissue and endometrium.

Its subcellular location is the membrane. It localises to the secreted. Its function is as follows. Secreted protein may play a role in transcription regulation via the MAPK3/MAPK1 pathway through an unidentified receptor on the plasma membrane. The chain is Protein C3orf33 (C3orf33) from Homo sapiens (Human).